Consider the following 62-residue polypeptide: MKANELKNATAAELEAKGTELTKELFNVKFQLHTGRLENTSKVSNLRKDIARVKTILREKRG.

The protein belongs to the universal ribosomal protein uL29 family.

This is Large ribosomal subunit protein uL29 from Geobacter sp. (strain M21).